We begin with the raw amino-acid sequence, 979 residues long: Pro-apoptotic serine protease NMA111 (979 aa).

Positions 1–20 are enriched in basic and acidic residues; it reads MKRNGESHLNGEAKKSRTEQ. The interval 1 to 43 is disordered; sequence MKRNGESHLNGEAKKSRTEQNQEQQDYQDEYYSSSDEELLPSS. Low complexity predominate over residues 21-34; it reads NQEQQDYQDEYYSS. Residues 65–260 are serine protease; sequence KVVNSVVSIQ…LPVSRPKRAL (196 aa). Catalysis depends on charge relay system residues histidine 108, aspartate 139, and serine 222. 2 PDZ domains span residues 277-362 and 871-943; these read EWQL…FVFQ and PHYG…VSFD.

Belongs to the peptidase S1C family.

The protein localises to the nucleus. Nuclear serine protease which mediates apoptosis. This chain is Pro-apoptotic serine protease NMA111 (NMA111), found in Lodderomyces elongisporus (strain ATCC 11503 / CBS 2605 / JCM 1781 / NBRC 1676 / NRRL YB-4239) (Yeast).